The sequence spans 162 residues: UPF0260 protein Caul_3920 (162 aa).

The protein belongs to the UPF0260 family.

The chain is UPF0260 protein Caul_3920 from Caulobacter sp. (strain K31).